The sequence spans 354 residues: Caffeic acid 3-O-methyltransferase (354 aa).

121 to 127 (MNQDKVL) is a substrate binding site. Residues 153-171 (AFEYHGKDQRFNKVFNSGM) form a substrate binding region. S-adenosyl-L-methionine contacts are provided by Gly199, Asp222, Asp242, Met243, and Lys256. His260 functions as the Proton acceptor in the catalytic mechanism.

It belongs to the class I-like SAM-binding methyltransferase superfamily. Cation-independent O-methyltransferase family. COMT subfamily. As to quaternary structure, homodimer.

It catalyses the reaction (E)-caffeate + S-adenosyl-L-methionine = (E)-ferulate + S-adenosyl-L-homocysteine + H(+). Its pathway is aromatic compound metabolism; phenylpropanoid biosynthesis. In terms of biological role, catalyzes the conversion of caffeic acid to ferulic acid and of 5-hydroxyferulic acid to sinapic acid. The resulting products may subsequently be converted to the corresponding alcohols that are incorporated into lignins. This Zinnia elegans (Garden zinnia) protein is Caffeic acid 3-O-methyltransferase.